A 650-amino-acid chain; its full sequence is 1-deoxy-D-xylulose-5-phosphate synthase (650 aa).

Thiamine diphosphate-binding positions include histidine 73 and 113–115; that span reads SHA. Position 145 (aspartate 145) interacts with Mg(2+). Thiamine diphosphate-binding positions include 146-147, asparagine 175, tyrosine 287, and glutamate 369; that span reads GA. Asparagine 175 is a Mg(2+) binding site.

This sequence belongs to the transketolase family. DXPS subfamily. As to quaternary structure, homodimer. The cofactor is Mg(2+). It depends on thiamine diphosphate as a cofactor.

The enzyme catalyses D-glyceraldehyde 3-phosphate + pyruvate + H(+) = 1-deoxy-D-xylulose 5-phosphate + CO2. Its pathway is metabolic intermediate biosynthesis; 1-deoxy-D-xylulose 5-phosphate biosynthesis; 1-deoxy-D-xylulose 5-phosphate from D-glyceraldehyde 3-phosphate and pyruvate: step 1/1. In terms of biological role, catalyzes the acyloin condensation reaction between C atoms 2 and 3 of pyruvate and glyceraldehyde 3-phosphate to yield 1-deoxy-D-xylulose-5-phosphate (DXP). The polypeptide is 1-deoxy-D-xylulose-5-phosphate synthase (Leifsonia xyli subsp. xyli (strain CTCB07)).